The chain runs to 372 residues: Cytochrome b (372 aa).

Transmembrane regions (helical) follow at residues 25–45, 69–90, 105–125, and 170–190; these read FGSM…FLAI, WIMQ…YIHI, WFSG…GYVL, and FFAL…IHII. Residues histidine 75 and histidine 89 each coordinate heme b. Residues histidine 174 and histidine 188 each contribute to the heme b site. Histidine 193 serves as a coordination point for a ubiquinone. Helical transmembrane passes span 218–238, 280–300, 312–332, and 339–358; these read YKDM…LSFM, LGGT…PFTH, LAQT…WTAT, and FILI…IMNP.

Belongs to the cytochrome b family. As to quaternary structure, the cytochrome bc1 complex contains 3 respiratory subunits (MT-CYB, CYC1 and UQCRFS1), 2 core proteins (UQCRC1 and UQCRC2) and probably 6 low-molecular weight proteins. It depends on heme b as a cofactor.

It localises to the mitochondrion inner membrane. Its function is as follows. Component of the ubiquinol-cytochrome c reductase complex (complex III or cytochrome b-c1 complex) that is part of the mitochondrial respiratory chain. The b-c1 complex mediates electron transfer from ubiquinol to cytochrome c. Contributes to the generation of a proton gradient across the mitochondrial membrane that is then used for ATP synthesis. This is Cytochrome b (MT-CYB) from Sinomicrurus japonicus (Coral snake).